A 135-amino-acid chain; its full sequence is Putative pre-16S rRNA nuclease (135 aa).

It belongs to the YqgF nuclease family.

The protein resides in the cytoplasm. Functionally, could be a nuclease involved in processing of the 5'-end of pre-16S rRNA. This Christiangramia forsetii (strain DSM 17595 / CGMCC 1.15422 / KT0803) (Gramella forsetii) protein is Putative pre-16S rRNA nuclease.